The sequence spans 359 residues: Guanine nucleotide-binding protein-like alpha-11 subunit (359 aa).

A lipid anchor (N-myristoyl glycine) is attached at Gly-2. One can recognise a G-alpha domain in the interval 29 to 359; sequence KLIKILMMGN…YVKKILEDTI (331 aa). Residues 32–45 are G1 motif; it reads KILMMGNENSAKST. Ser-44 contacts Mg(2+). The interval 176–185 is G2 motif; that stretch reads DIIRCSKNNQ. Residues 178-185, 204-208, and 281-284 each bind GTP; these read IRCSKNNQ, DTGNQ, and NKKE. The segment at 200-209 is G3 motif; sequence FVFVDTGNQK. Residues 277–284 form a G4 motif region; that stretch reads IVLFNKKE. Positions 337–342 are G5 motif; it reads FNSSDT.

It belongs to the G-alpha family.

The chain is Guanine nucleotide-binding protein-like alpha-11 subunit (gpaK) from Dictyostelium discoideum (Social amoeba).